The sequence spans 163 residues: Putative pre-16S rRNA nuclease (163 aa).

This sequence belongs to the YqgF nuclease family.

The protein localises to the cytoplasm. Functionally, could be a nuclease involved in processing of the 5'-end of pre-16S rRNA. The sequence is that of Putative pre-16S rRNA nuclease from Nitrobacter hamburgensis (strain DSM 10229 / NCIMB 13809 / X14).